The sequence spans 87 residues: UPF0250 protein Ent638_1166 (87 aa).

The protein belongs to the UPF0250 family.

The polypeptide is UPF0250 protein Ent638_1166 (Enterobacter sp. (strain 638)).